Consider the following 706-residue polypeptide: Semenogelin-2 (706 aa).

An N-terminal signal peptide occupies residues 1-23 (MKSIILFVLSLLLILEKQAAVMG). Disordered stretches follow at residues 25–62 (KGGS…SKGS), 131–156 (KGGQ…KGIF), and 276–678 (NLNQ…SGAH). A compositionally biased stretch (basic and acidic residues) spans 50 to 59 (GQKDKQHTES). Residues 137–151 (HGTQNPSQDQGNSPS) show a composition bias toward polar residues. Over residues 297–308 (TEERQPNHEENS) the composition is skewed to basic and acidic residues. Positions 329–339 (KSQNQVTIPSQ) are enriched in polar residues. The segment covering 340–349 (DQEHGHKENK) has biased composition (basic and acidic residues). Polar residues predominate over residues 389-399 (KSQNQVTIPSQ). Over residues 400–409 (DQEHGHKENK) the composition is skewed to basic and acidic residues. Residues 449–459 (KSQNQVTIPSQ) are compositionally biased toward polar residues. Residues 460 to 469 (DQEHGHKENK) are compositionally biased toward basic and acidic residues. A compositionally biased stretch (polar residues) spans 509-519 (KSQNQVAIPSQ). Positions 520 to 529 (DQEHGHKENK) are enriched in basic and acidic residues. Polar residues predominate over residues 569–579 (KSQNQVTIPSQ). Over residues 580–589 (DQEHGHKENK) the composition is skewed to basic and acidic residues. Composition is skewed to polar residues over residues 611-622 (KDVSQSSLSFQT) and 630-653 (SQIQ…NSGK). Residues 654-670 (SADREQDLLSHEQEGRY) show a composition bias toward basic and acidic residues.

Belongs to the semenogelin family. As to quaternary structure, interacts with SERPINA5.

Its subcellular location is the secreted. Its function is as follows. Participates in the formation of a gel matrix (sperm coagulum) entrapping the accessory gland secretions and ejaculated spermatozoa. This is Semenogelin-2 (SEMG2) from Macaca mulatta (Rhesus macaque).